A 357-amino-acid chain; its full sequence is Phosphoribosylformylglycinamidine cyclo-ligase (357 aa).

It belongs to the AIR synthase family.

It is found in the cytoplasm. It catalyses the reaction 2-formamido-N(1)-(5-O-phospho-beta-D-ribosyl)acetamidine + ATP = 5-amino-1-(5-phospho-beta-D-ribosyl)imidazole + ADP + phosphate + H(+). Its pathway is purine metabolism; IMP biosynthesis via de novo pathway; 5-amino-1-(5-phospho-D-ribosyl)imidazole from N(2)-formyl-N(1)-(5-phospho-D-ribosyl)glycinamide: step 2/2. The polypeptide is Phosphoribosylformylglycinamidine cyclo-ligase (Nitrobacter winogradskyi (strain ATCC 25391 / DSM 10237 / CIP 104748 / NCIMB 11846 / Nb-255)).